The primary structure comprises 230 residues: Phosphoribosylformylglycinamidine synthase subunit PurQ (230 aa).

Residues 2 to 230 (KIAVTKFLGT…KGMIDYAKRI (229 aa)) enclose the Glutamine amidotransferase type-1 domain. C85 functions as the Nucleophile in the catalytic mechanism. Residues H202 and E204 contribute to the active site.

In terms of assembly, part of the FGAM synthase complex composed of 1 PurL, 1 PurQ and 2 PurS subunits.

The protein resides in the cytoplasm. The catalysed reaction is N(2)-formyl-N(1)-(5-phospho-beta-D-ribosyl)glycinamide + L-glutamine + ATP + H2O = 2-formamido-N(1)-(5-O-phospho-beta-D-ribosyl)acetamidine + L-glutamate + ADP + phosphate + H(+). It carries out the reaction L-glutamine + H2O = L-glutamate + NH4(+). It participates in purine metabolism; IMP biosynthesis via de novo pathway; 5-amino-1-(5-phospho-D-ribosyl)imidazole from N(2)-formyl-N(1)-(5-phospho-D-ribosyl)glycinamide: step 1/2. Its function is as follows. Part of the phosphoribosylformylglycinamidine synthase complex involved in the purines biosynthetic pathway. Catalyzes the ATP-dependent conversion of formylglycinamide ribonucleotide (FGAR) and glutamine to yield formylglycinamidine ribonucleotide (FGAM) and glutamate. The FGAM synthase complex is composed of three subunits. PurQ produces an ammonia molecule by converting glutamine to glutamate. PurL transfers the ammonia molecule to FGAR to form FGAM in an ATP-dependent manner. PurS interacts with PurQ and PurL and is thought to assist in the transfer of the ammonia molecule from PurQ to PurL. In Methanocaldococcus jannaschii (strain ATCC 43067 / DSM 2661 / JAL-1 / JCM 10045 / NBRC 100440) (Methanococcus jannaschii), this protein is Phosphoribosylformylglycinamidine synthase subunit PurQ.